Here is a 644-residue protein sequence, read N- to C-terminus: Protein cueball (644 aa).

The N-terminal stretch at 1-26 is a signal peptide; it reads MIRIRFGMDVLLVVLLATCLLTPAHG. Topologically, residues 27–531 are extracellular; it reads TPLEWDFAVT…VCLTPRVWTS (505 aa). Asparagine 82 and asparagine 108 each carry an N-linked (GlcNAc...) asparagine glycan. LDL-receptor class B repeat units lie at residues 121 to 166, 167 to 211, and 212 to 257; these read MNLF…DVCR, RKLY…DQLS, and DRLF…TNDA. 2 N-linked (GlcNAc...) asparagine glycosylation sites follow: asparagine 175 and asparagine 190. Asparagine 313 carries N-linked (GlcNAc...) asparagine glycosylation. EGF-like domains are found at residues 398–430 and 433–471; these read EIRE…FTGE and ELSV…ARCE. Intrachain disulfides connect cysteine 402–cysteine 411, cysteine 406–cysteine 421, cysteine 437–cysteine 447, cysteine 441–cysteine 459, and cysteine 461–cysteine 470. N-linked (GlcNAc...) asparagine glycosylation is found at asparagine 473 and asparagine 508. Residues 532-552 traverse the membrane as a helical segment; that stretch reads SVIIILVVGIVSSLLLVAVIV. Residues 553–644 are Cytoplasmic-facing; sequence HGIRRLYKPK…LIHNMEDDLY (92 aa).

The protein belongs to the cueball family.

It is found in the cell membrane. Its function is as follows. Has a role in spermatogenesis and oogenesis. This chain is Protein cueball, found in Drosophila simulans (Fruit fly).